Consider the following 138-residue polypeptide: Putative pre-16S rRNA nuclease (138 aa).

It belongs to the YqgF nuclease family.

The protein localises to the cytoplasm. Could be a nuclease involved in processing of the 5'-end of pre-16S rRNA. The sequence is that of Putative pre-16S rRNA nuclease from Flavobacterium johnsoniae (strain ATCC 17061 / DSM 2064 / JCM 8514 / BCRC 14874 / CCUG 350202 / NBRC 14942 / NCIMB 11054 / UW101) (Cytophaga johnsonae).